The chain runs to 99 residues: Small integral membrane protein 9 (99 aa).

The signal sequence occupies residues 1-26 (MEPQKLLIIGFLLCSLTCLLLETVAS). Topologically, residues 27 to 73 (SPLPLSALGIQEKTGSKPRSGGNHRSWLNNFRDYLWQLIKSALPPAA) are extracellular. Residues 74 to 94 (IVAFLLTSALMGILCCFTILV) traverse the membrane as a helical segment. Over 95-99 (VDPVH) the chain is Cytoplasmic.

The protein localises to the cell membrane. In Homo sapiens (Human), this protein is Small integral membrane protein 9 (SMIM9).